We begin with the raw amino-acid sequence, 274 residues long: MAD2L1-binding protein (274 aa).

Residues 45–78 (ASEAFCPRDCMVPVVFPGPVSQEGCCQFTCELLK) form an interaction with MAD2L1 region. At serine 102 the chain carries Phosphoserine.

The protein belongs to the MAD2L1BP family. As to quaternary structure, interacts with MAD2L1.

Its subcellular location is the nucleus. The protein localises to the cytoplasm. It localises to the cytoskeleton. It is found in the spindle. Its function is as follows. May function to silence the spindle checkpoint and allow mitosis to proceed through anaphase by binding MAD2L1 after it has become dissociated from the MAD2L1-CDC20 complex. In Homo sapiens (Human), this protein is MAD2L1-binding protein (MAD2L1BP).